The following is a 278-amino-acid chain: MATH domain and coiled-coil domain-containing protein At1g31400 (278 aa).

An MATH domain is found at 6–131 (EKRITWTIKN…SGQVKIVAEV (126 aa)). The stretch at 232 to 267 (KLDWLEKKLKEVGKTRMQQLEQNLKDLKESLCWSSD) forms a coiled coil.

This chain is MATH domain and coiled-coil domain-containing protein At1g31400, found in Arabidopsis thaliana (Mouse-ear cress).